A 276-amino-acid chain; its full sequence is C-type lectin domain family 12 member B (276 aa).

Residues 1–43 (MSEDMTYATLTFQDSVAAGNNQDRNNLRKRGYPAPSSIWRQAA) are Cytoplasmic-facing. Positions 5-10 (MTYATL) match the ITIM motif motif. Y7 carries the phosphotyrosine modification. A helical; Signal-anchor for type II membrane protein membrane pass occupies residues 44–64 (LGLLTLCVMLLIGLVTLGIMF). The Extracellular portion of the chain corresponds to 65 to 276 (LQMSSEINSD…AALVKIEDLD (212 aa)). 3 N-linked (GlcNAc...) asparagine glycosylation sites follow: N91, N176, and N237. The C-type lectin domain occupies 150 to 264 (YQTSCYYFAV…CSAEISWICE (115 aa)). Intrachain disulfides connect C172–C263 and C242–C255.

In terms of assembly, homodimer. Interacts (via ITIM motif) with PTPN6. Interacts (via ITIM motif) with PTPN11; this interaction triggers dephosphorylation and activation of PTPN11.

The protein localises to the cell membrane. Functionally, inhibitory receptor postulated to negatively regulate immune and non-immune functions. Upon phosphorylation, recruits SH2 domain-containing PTPN6 and PTPN11 phosphatases to its ITIM motif and antagonizes activation signals. Although it inhibits KLRK1/NKG2D-mediated signaling, it does not bind known ligands of KLRK1/NKG2D and therefore is not its inhibitory counterpart. May limit activation of myeloid cell subsets in response to infection or tissue inflammation. May protect target cells against natural killer cell-mediated lysis. May negatively regulate cell cycle and differentiation of melanocytes via inactivation of STAT3. The sequence is that of C-type lectin domain family 12 member B (CLEC12B) from Bos taurus (Bovine).